Consider the following 454-residue polypeptide: Methylenetetrahydrofolate--tRNA-(uracil-5-)-methyltransferase TrmFO (454 aa).

Residue 9–14 participates in FAD binding; the sequence is GAGLAG. Positions 432–454 are disordered; it reads LERVSPPSRETGEPTGAEQVDLA.

The protein belongs to the MnmG family. TrmFO subfamily. The cofactor is FAD.

The protein localises to the cytoplasm. The enzyme catalyses uridine(54) in tRNA + (6R)-5,10-methylene-5,6,7,8-tetrahydrofolate + NADH + H(+) = 5-methyluridine(54) in tRNA + (6S)-5,6,7,8-tetrahydrofolate + NAD(+). It carries out the reaction uridine(54) in tRNA + (6R)-5,10-methylene-5,6,7,8-tetrahydrofolate + NADPH + H(+) = 5-methyluridine(54) in tRNA + (6S)-5,6,7,8-tetrahydrofolate + NADP(+). Catalyzes the folate-dependent formation of 5-methyl-uridine at position 54 (M-5-U54) in all tRNAs. In Pelobacter propionicus (strain DSM 2379 / NBRC 103807 / OttBd1), this protein is Methylenetetrahydrofolate--tRNA-(uracil-5-)-methyltransferase TrmFO.